Consider the following 237-residue polypeptide: Protein GrpE (237 aa).

Disordered regions lie at residues 1 to 52 (MSGD…RLQQ) and 200 to 237 (KVSMGPGPQSGASPSSAQSNDDSTATFQGEADPAEPGV). Residues 27–40 (ASMNSDEGQPSAQS) are compositionally biased toward polar residues. Positions 204 to 218 (GPGPQSGASPSSAQS) are enriched in low complexity.

The protein belongs to the GrpE family. As to quaternary structure, homodimer.

The protein localises to the cytoplasm. Participates actively in the response to hyperosmotic and heat shock by preventing the aggregation of stress-denatured proteins, in association with DnaK and GrpE. It is the nucleotide exchange factor for DnaK and may function as a thermosensor. Unfolded proteins bind initially to DnaJ; upon interaction with the DnaJ-bound protein, DnaK hydrolyzes its bound ATP, resulting in the formation of a stable complex. GrpE releases ADP from DnaK; ATP binding to DnaK triggers the release of the substrate protein, thus completing the reaction cycle. Several rounds of ATP-dependent interactions between DnaJ, DnaK and GrpE are required for fully efficient folding. This Prochlorococcus marinus (strain MIT 9303) protein is Protein GrpE.